The sequence spans 526 residues: Fumitremorgin C synthase (526 aa).

Residues 4-24 (LPLSPAVLFLIIVLPILYLWI) traverse the membrane as a helical segment. Position 443 (Cys-443) interacts with heme.

This sequence belongs to the cytochrome P450 family. The cofactor is heme.

The protein resides in the membrane. It catalyses the reaction tryprostatin A + reduced [NADPH--hemoprotein reductase] + O2 = fumitremorgin C + oxidized [NADPH--hemoprotein reductase] + 2 H2O + H(+). Its pathway is mycotoxin biosynthesis. Its function is as follows. Cytochrome P450 monooxygenase; part of the gene cluster that mediates the biosynthesis of fumitremorgins, indole alkaloids that carry not only intriguing chemical structures, but also interesting biological and pharmacological activities. The biosynthesis of fumitremorgin-type alkaloids begins by condensation of the two amino acids L-tryptophan and L-proline to brevianamide F, catalyzed by the non-ribosomal peptide synthetase ftmA. Brevianamide F is then prenylated by the prenyltransferase ftmPT1/ftmB in the presence of dimethylallyl diphosphate, resulting in the formation of tryprostatin B. The three cytochrome P450 monooxygenases, ftmP450-1/ftmC, ftmP450-2/ftmE and ftmP450-3/FtmG, are responsible for the conversion of tryprostatin B to 6-hydroxytryprostatin B, tryprostatin A to fumitremorgin C and fumitremorgin C to 12,13-dihydroxyfumitremorgin C, respectively. The putative methyltransferase ftmMT/ftmD is expected for the conversion of 6-hydroxytryprostatin B to tryprostatin A. FtmPT2/FtmH catalyzes the prenylation of 12,13-dihydroxyfumitre-morgin C in the presence of dimethylallyl diphosphate, resulting in the formation of fumitremorgin B. Fumitremorgin B is further converted to verruculogen by ftmOx1/ftmF via the insertion of an endoperoxide bond between the two prenyl moieties. In some fungal species, verruculogen is further converted to fumitremorgin A, but the enzymes involved in this step have not been identified yet. This is Fumitremorgin C synthase from Aspergillus fumigatus (Neosartorya fumigata).